The sequence spans 61 residues: Lens epithelial cell protein LEP503 (61 aa).

As to expression, preferentially expressed in the lens epithelial cells.

The protein is Lens epithelial cell protein LEP503 (Lenep) of Rattus norvegicus (Rat).